The primary structure comprises 477 residues: Lactate utilization protein B (477 aa).

4Fe-4S ferredoxin-type domains follow at residues 304–334 and 353–382; these read GTEF…GHSY and YDDY…LHEL. Residues C313, C316, C319, C323, C366, C369, and C373 each contribute to the [4Fe-4S] cluster site. Residues 433 to 477 form a disordered region; that stretch reads KEDGKITKGPGPLKQWTQIRDFPAPNKSRFRDWFEDRRKEKGEDK. A compositionally biased stretch (basic and acidic residues) spans 461–477; sequence RFRDWFEDRRKEKGEDK.

This sequence belongs to the LutB/YkgF family.

In terms of biological role, is involved in L-lactate degradation and allows cells to grow with lactate as the sole carbon source. Has probably a role as an electron transporter during oxidation of L-lactate. The sequence is that of Lactate utilization protein B from Bacillus licheniformis (strain ATCC 14580 / DSM 13 / JCM 2505 / CCUG 7422 / NBRC 12200 / NCIMB 9375 / NCTC 10341 / NRRL NRS-1264 / Gibson 46).